Here is a 156-residue protein sequence, read N- to C-terminus: Aspartate 1-decarboxylase (156 aa).

Ser29 acts as the Schiff-base intermediate with substrate; via pyruvic acid in catalysis. A Pyruvic acid (Ser) modification is found at Ser29. Thr61 serves as a coordination point for substrate. The active-site Proton donor is Tyr62. 77–79 contributes to the substrate binding site; the sequence is GAA.

This sequence belongs to the PanD family. As to quaternary structure, heterooctamer of four alpha and four beta subunits. It depends on pyruvate as a cofactor. In terms of processing, is synthesized initially as an inactive proenzyme, which is activated by self-cleavage at a specific serine bond to produce a beta-subunit with a hydroxyl group at its C-terminus and an alpha-subunit with a pyruvoyl group at its N-terminus.

It is found in the cytoplasm. The enzyme catalyses L-aspartate + H(+) = beta-alanine + CO2. The protein operates within cofactor biosynthesis; (R)-pantothenate biosynthesis; beta-alanine from L-aspartate: step 1/1. Its function is as follows. Catalyzes the pyruvoyl-dependent decarboxylation of aspartate to produce beta-alanine. This chain is Aspartate 1-decarboxylase, found in Rhodopirellula baltica (strain DSM 10527 / NCIMB 13988 / SH1).